A 138-amino-acid chain; its full sequence is Thyrotropin subunit beta (138 aa).

An N-terminal signal peptide occupies residues 1 to 20 (MSAAVLLSVLFALACGQAAS). 6 cysteine pairs are disulfide-bonded: Cys22–Cys72, Cys36–Cys87, Cys39–Cys125, Cys47–Cys103, Cys51–Cys105, and Cys108–Cys115. Asn43 is a glycosylation site (N-linked (GlcNAc...) asparagine). Positions 133-138 (LGGFSV) are excised as a propeptide.

This sequence belongs to the glycoprotein hormones subunit beta family. In terms of assembly, heterodimer of a common alpha chain and a unique beta chain which confers biological specificity to thyrotropin, lutropin, follitropin and gonadotropin.

It is found in the secreted. Its function is as follows. Indispensable for the control of thyroid structure and metabolism. This is Thyrotropin subunit beta (Tshb) from Mus musculus (Mouse).